Here is a 392-residue protein sequence, read N- to C-terminus: S-adenosylmethionine synthase (392 aa).

H17 is a binding site for ATP. A Mg(2+)-binding site is contributed by D19. E45 serves as a coordination point for K(+). L-methionine is bound by residues E58 and Q102. The segment at 102–112 is flexible loop; it reads QSADIAQGVDA. ATP is bound by residues 169–171, 235–236, D244, 250–251, A267, and K271; these read DAK, KF, and RK. D244 serves as a coordination point for L-methionine. K275 provides a ligand contact to L-methionine.

It belongs to the AdoMet synthase family. As to quaternary structure, homotetramer; dimer of dimers. It depends on Mg(2+) as a cofactor. The cofactor is K(+).

It is found in the cytoplasm. The catalysed reaction is L-methionine + ATP + H2O = S-adenosyl-L-methionine + phosphate + diphosphate. It functions in the pathway amino-acid biosynthesis; S-adenosyl-L-methionine biosynthesis; S-adenosyl-L-methionine from L-methionine: step 1/1. Catalyzes the formation of S-adenosylmethionine (AdoMet) from methionine and ATP. The overall synthetic reaction is composed of two sequential steps, AdoMet formation and the subsequent tripolyphosphate hydrolysis which occurs prior to release of AdoMet from the enzyme. The polypeptide is S-adenosylmethionine synthase (Methylobacterium nodulans (strain LMG 21967 / CNCM I-2342 / ORS 2060)).